Consider the following 262-residue polypeptide: Caffeyl-CoA reductase-Etf complex subunit CarD (262 aa).

Belongs to the ETF beta-subunit/FixA family. In terms of assembly, part of the homotrimeric caffeyl-CoA reductase-Etf complex composed of (R)-2-hydroxyisocaproyl-CoA dehydratase CarC, and the electron transfer flavoprotein (ETF) alpha (CarE) and beta (CarD) subunits. FAD serves as cofactor. It depends on AMP as a cofactor.

The protein resides in the cytoplasm. It catalyses the reaction hydrocaffeoyl-CoA + 2 reduced [2Fe-2S]-[ferredoxin] + 2 NAD(+) = (E)-caffeoyl-CoA + 2 oxidized [2Fe-2S]-[ferredoxin] + 2 NADH. Its function is as follows. Caffeyl-CoA reductase-Etf complex catalyzes the reduction of caffeyl-CoA to yield hydrocaffeyl-CoA. It couples the endergonic ferredoxin reduction with NADH as reductant to the exergonic reduction of caffeoyl-CoA with the same reductant. It uses the mechanism of electron bifurcation to overcome the steep energy barrier in ferredoxin reduction. The electron transfer flavoprotein (Etf) mediates the electron transfer between the different donors and acceptors. The complex can also reduce 4-coumaroyl-CoA and feruloyl-CoA. The chain is Caffeyl-CoA reductase-Etf complex subunit CarD from Acetobacterium woodii (strain ATCC 29683 / DSM 1030 / JCM 2381 / KCTC 1655 / WB1).